Here is a 203-residue protein sequence, read N- to C-terminus: Superoxide dismutase [Mn] (203 aa).

Mn(2+) contacts are provided by His27, His81, Asp164, and His168.

It belongs to the iron/manganese superoxide dismutase family. In terms of assembly, homodimer. It depends on Mn(2+) as a cofactor.

The catalysed reaction is 2 superoxide + 2 H(+) = H2O2 + O2. Functionally, destroys superoxide anion radicals which are normally produced within the cells and which are toxic to biological systems. Partially complements double sodA-sodB deletions in E.coli. The polypeptide is Superoxide dismutase [Mn] (Pseudomonas aeruginosa (strain ATCC 15692 / DSM 22644 / CIP 104116 / JCM 14847 / LMG 12228 / 1C / PRS 101 / PAO1)).